Reading from the N-terminus, the 304-residue chain is Voltage-dependent anion channel-forming protein YneE (304 aa).

A run of 4 helical transmembrane segments spans residues 28–48 (LLLNFLLSIAVIIMLPWYTML), 50–70 (IKFTLAPFSILGVAIAIFLGF), 209–229 (AYTLILHRTVYLFCIMLPFAL), and 235–255 (YMTPFISVLISYTFIALDALA).

The protein belongs to the anion channel-forming bestrophin (TC 1.A.46) family.

It is found in the cell membrane. The chain is Voltage-dependent anion channel-forming protein YneE (yneE) from Salmonella typhi.